We begin with the raw amino-acid sequence, 219 residues long: Swarming motility regulation protein RssB (219 aa).

The region spanning 2–116 (NILLVEDDLQ…ELISRVKAVN (115 aa)) is the Response regulatory domain. Asp51 carries the 4-aspartylphosphate modification. Residues 124 to 218 (SQTWSLGALY…VRGIGYLLKK (95 aa)) constitute a DNA-binding region (ompR/PhoB-type).

Its subcellular location is the cytoplasm. Member of the two-component regulatory system RssA/RssB involved in regulation of swarming motility which has been shown to be inhibited by saturated fatty acids. RssA/RssB regulates cellular fatty acid composition, hemolysin production and cell surface topography. RssA/RssB negatively regulates the activity of SlhBA. It can also act as a negative regulator for the control of the swarming initiation. RssB binds its own promoter. This is Swarming motility regulation protein RssB (rssB) from Serratia marcescens.